The chain runs to 229 residues: Probable ribonuclease H (229 aa).

The 123-residue stretch at 42–164 folds into the RNase H type-1 domain; that stretch reads LQDISLEFDK…ADFLANSAAK (123 aa). A divalent metal cation is bound by residues Glu-60, Asp-87, and Asp-156.

It belongs to the RNase H family. The cofactor is a divalent metal cation.

It catalyses the reaction Endonucleolytic cleavage to 5'-phosphomonoester.. Functionally, endonuclease that specifically degrades the RNA of RNA-DNA hybrids. The sequence is that of Probable ribonuclease H (RNH1) from Acanthamoeba polyphaga mimivirus (APMV).